Consider the following 65-residue polypeptide: MVSVQLNDNESIDKMLKRFKKKYERAGVLKEFRKKAYFVKPSIDDRLKRSRGKRRAQRANEERNS.

A disordered region spans residues 44 to 65 (DDRLKRSRGKRRAQRANEERNS). A compositionally biased stretch (basic residues) spans 48–57 (KRSRGKRRAQ).

Belongs to the bacterial ribosomal protein bS21 family.

This is Small ribosomal subunit protein bS21 from Prosthecochloris aestuarii (strain DSM 271 / SK 413).